Here is a 56-residue protein sequence, read N- to C-terminus: Male determiner protein Yob (56 aa).

Its function is as follows. Male determiner protein (M-factor) that controls male somatic sexual differentiation. Acts as a dominant factor that regulates the mRNA splicing of doublesex (dsx) transcripts and promotes expression of male splice forms of dsx. The polypeptide is Male determiner protein Yob (Anopheles gambiae (African malaria mosquito)).